The chain runs to 339 residues: Anthranilate phosphoribosyltransferase (339 aa).

Residues Gly-79, 82–83, Ser-87, 89–92, 107–115, and Ser-119 each bind 5-phospho-alpha-D-ribose 1-diphosphate; these read GD, NIST, and KHGNRSISS. Gly-79 contacts anthranilate. Residue Ser-91 coordinates Mg(2+). Anthranilate is bound at residue Asn-110. Arg-165 serves as a coordination point for anthranilate. Asp-224 and Glu-225 together coordinate Mg(2+).

It belongs to the anthranilate phosphoribosyltransferase family. Homodimer. The cofactor is Mg(2+).

The enzyme catalyses N-(5-phospho-beta-D-ribosyl)anthranilate + diphosphate = 5-phospho-alpha-D-ribose 1-diphosphate + anthranilate. Its pathway is amino-acid biosynthesis; L-tryptophan biosynthesis; L-tryptophan from chorismate: step 2/5. Catalyzes the transfer of the phosphoribosyl group of 5-phosphorylribose-1-pyrophosphate (PRPP) to anthranilate to yield N-(5'-phosphoribosyl)-anthranilate (PRA). The sequence is that of Anthranilate phosphoribosyltransferase from Listeria monocytogenes serotype 4a (strain HCC23).